A 65-amino-acid polypeptide reads, in one-letter code: Cold shock-like protein CspC (65 aa).

The 60-residue stretch at 3–62 folds into the CSD domain; that stretch reads GRVKWFNAEKGFGFIEREDGDDVFVHFSAIQQDGYKSLEEGQQVEFDIVDGARGPQAANV.

Homodimer.

It localises to the cytoplasm. This chain is Cold shock-like protein CspC (cspC), found in Bacillus cereus.